Consider the following 138-residue polypeptide: MASLSATTTVRVQPSSSSLHKLSQGNGRCSSIVCLDWGKSSFPTLRTSRRRSFISAAKKETIDKVCDIVKEKLALGADVVVTADSEFSKLGADSLDTVEIVMNLEEEFGINVDEDKAQDISTIQQAADVIESLLEKKA.

The N-terminal 56 residues, 1-56, are a transit peptide targeting the chloroplast; sequence MASLSATTTVRVQPSSSSLHKLSQGNGRCSSIVCLDWGKSSFPTLRTSRRRSFISA. The 76-residue stretch at 59–134 folds into the Carrier domain; it reads KETIDKVCDI…QAADVIESLL (76 aa). An O-(pantetheine 4'-phosphoryl)serine modification is found at S94.

Belongs to the acyl carrier protein (ACP) family. Post-translationally, 4'-phosphopantetheine is transferred from CoA to a specific serine of apo-ACP by acpS. This modification is essential for activity because fatty acids are bound in thioester linkage to the sulfhydryl of the prosthetic group.

It is found in the plastid. The protein resides in the chloroplast. Its pathway is lipid metabolism; fatty acid biosynthesis. Functionally, carrier of the growing fatty acid chain in fatty acid biosynthesis. This Spinacia oleracea (Spinach) protein is Acyl carrier protein 1, chloroplastic (ACL1.1).